Consider the following 230-residue polypeptide: Thymidylate kinase (230 aa).

Residue 20-27 coordinates ATP; it reads GGEGAGKS.

The protein belongs to the thymidylate kinase family.

It catalyses the reaction dTMP + ATP = dTDP + ADP. Phosphorylation of dTMP to form dTDP in both de novo and salvage pathways of dTTP synthesis. In Rhodopseudomonas palustris (strain ATCC BAA-98 / CGA009), this protein is Thymidylate kinase.